Consider the following 437-residue polypeptide: Amino-acid acetyltransferase (437 aa).

One can recognise an N-acetyltransferase domain in the interval 289-429 (ENIRLATSFD…EHYNYQRMSK (141 aa)).

The protein belongs to the acetyltransferase family. ArgA subfamily.

The protein localises to the cytoplasm. It carries out the reaction L-glutamate + acetyl-CoA = N-acetyl-L-glutamate + CoA + H(+). It participates in amino-acid biosynthesis; L-arginine biosynthesis; N(2)-acetyl-L-ornithine from L-glutamate: step 1/4. This chain is Amino-acid acetyltransferase, found in Actinobacillus pleuropneumoniae serotype 5b (strain L20).